The sequence spans 116 residues: Nucleoid-associated protein P9215_00191 (116 aa).

Belongs to the YbaB/EbfC family. As to quaternary structure, homodimer.

The protein localises to the cytoplasm. The protein resides in the nucleoid. Its function is as follows. Binds to DNA and alters its conformation. May be involved in regulation of gene expression, nucleoid organization and DNA protection. The polypeptide is Nucleoid-associated protein P9215_00191 (Prochlorococcus marinus (strain MIT 9215)).